Reading from the N-terminus, the 309-residue chain is Probable cell division protein kinase ECU11_1290 (309 aa).

The Protein kinase domain maps to 4-288 (YENIKQVGEG…VISSHKNTYI (285 aa)). ATP contacts are provided by residues 10 to 18 (VGEGAFGQV) and lysine 33. Aspartate 124 functions as the Proton acceptor in the catalytic mechanism.

It belongs to the protein kinase superfamily. CMGC Ser/Thr protein kinase family. CDC2/CDKX subfamily.

It is found in the nucleus. It catalyses the reaction L-seryl-[protein] + ATP = O-phospho-L-seryl-[protein] + ADP + H(+). The enzyme catalyses L-threonyl-[protein] + ATP = O-phospho-L-threonyl-[protein] + ADP + H(+). May play a role in the control of the eukaryotic cell cycle. This is Probable cell division protein kinase ECU11_1290 from Encephalitozoon cuniculi (strain GB-M1) (Microsporidian parasite).